A 264-amino-acid chain; its full sequence is Glucosamine-6-phosphate deaminase (264 aa).

Asp-72 functions as the Proton acceptor; for enolization step in the catalytic mechanism. Residue Asp-141 is the For ring-opening step of the active site. The active-site Proton acceptor; for ring-opening step is the His-143. The active-site For ring-opening step is the Glu-148.

Belongs to the glucosamine/galactosamine-6-phosphate isomerase family. NagB subfamily. As to quaternary structure, homohexamer.

The catalysed reaction is alpha-D-glucosamine 6-phosphate + H2O = beta-D-fructose 6-phosphate + NH4(+). The protein operates within amino-sugar metabolism; N-acetylneuraminate degradation; D-fructose 6-phosphate from N-acetylneuraminate: step 5/5. With respect to regulation, allosterically activated by N-acetylglucosamine 6-phosphate (GlcNAc6P). Its function is as follows. Catalyzes the reversible isomerization-deamination of glucosamine 6-phosphate (GlcN6P) to form fructose 6-phosphate (Fru6P) and ammonium ion. This is Glucosamine-6-phosphate deaminase from Glaesserella parasuis serovar 5 (strain SH0165) (Haemophilus parasuis).